Reading from the N-terminus, the 201-residue chain is Small ribosomal subunit protein uS4c (201 aa).

The region spanning 89–151 (MRLDNILFRL…QKSKTLIQNY (63 aa)) is the S4 RNA-binding domain.

This sequence belongs to the universal ribosomal protein uS4 family. In terms of assembly, part of the 30S ribosomal subunit. Contacts protein S5. The interaction surface between S4 and S5 is involved in control of translational fidelity.

The protein resides in the plastid. It localises to the chloroplast. Functionally, one of the primary rRNA binding proteins, it binds directly to 16S rRNA where it nucleates assembly of the body of the 30S subunit. With S5 and S12 plays an important role in translational accuracy. This chain is Small ribosomal subunit protein uS4c (rps4), found in Phaseolus vulgaris (Kidney bean).